The primary structure comprises 256 residues: Peroxisomal membrane protein PMP30B (256 aa).

It belongs to the peroxin-11 family.

Its subcellular location is the peroxisome membrane. Functionally, involved in peroxisomal proliferation. Could participate in peroxisomal elongation or fission. May be involved in parceling of peroxisomes into regular quanta. The chain is Peroxisomal membrane protein PMP30B (PEX11B) from Candida boidinii (Yeast).